A 342-amino-acid chain; its full sequence is tRNA dimethylallyltransferase (342 aa).

39–46 (GPTGSGKT) is a binding site for ATP. 41 to 46 (TGSGKT) serves as a coordination point for substrate. Residues 64-67 (DSMQ) form an interaction with substrate tRNA region.

The protein belongs to the IPP transferase family. Monomer. Mg(2+) is required as a cofactor.

It catalyses the reaction adenosine(37) in tRNA + dimethylallyl diphosphate = N(6)-dimethylallyladenosine(37) in tRNA + diphosphate. In terms of biological role, catalyzes the transfer of a dimethylallyl group onto the adenine at position 37 in tRNAs that read codons beginning with uridine, leading to the formation of N6-(dimethylallyl)adenosine (i(6)A). The polypeptide is tRNA dimethylallyltransferase (Chlamydia abortus (strain DSM 27085 / S26/3) (Chlamydophila abortus)).